The primary structure comprises 268 residues: FKBP-type peptidyl-prolyl cis-trans isomerase FkpA (268 aa).

A signal peptide spans 1-20; it reads MNNFLKVSLLAAAVAVSLTA. The PPIase FKBP-type domain occupies 172–257; it reads TDIVKVHYTG…VFDVELLAIE (86 aa).

Belongs to the FKBP-type PPIase family.

The protein resides in the periplasm. The enzyme catalyses [protein]-peptidylproline (omega=180) = [protein]-peptidylproline (omega=0). Its function is as follows. PPIases accelerate the folding of proteins. It catalyzes the cis-trans isomerization of proline imidic peptide bonds in oligopeptides. FkpA probably acts in the folding of extracytoplasmic proteins. This Aeromonas hydrophila protein is FKBP-type peptidyl-prolyl cis-trans isomerase FkpA (fkpA).